The sequence spans 164 residues: MRNIYLVGFMGSGKSTVGKLLAEKLGFRFVDIDQEIEKEEGKKIKDIFREKGESYFRDLEKRMIERFLGSKNLVVSTGGGLGADSENMRKMKENGTVIWLDTPLETVFERCKGDDERPLLKKNRKEIKELFEKRKKIYAQADIRISTEGKSPYQIVNEILGRIR.

Residue 11–16 (GSGKST) coordinates ATP. S15 contacts Mg(2+). Residues D33, R57, and G79 each coordinate substrate. R117 lines the ATP pocket. Residue R134 coordinates substrate.

This sequence belongs to the shikimate kinase family. As to quaternary structure, monomer. Mg(2+) is required as a cofactor.

The protein localises to the cytoplasm. The enzyme catalyses shikimate + ATP = 3-phosphoshikimate + ADP + H(+). It functions in the pathway metabolic intermediate biosynthesis; chorismate biosynthesis; chorismate from D-erythrose 4-phosphate and phosphoenolpyruvate: step 5/7. In terms of biological role, catalyzes the specific phosphorylation of the 3-hydroxyl group of shikimic acid using ATP as a cosubstrate. The chain is Shikimate kinase from Persephonella marina (strain DSM 14350 / EX-H1).